The primary structure comprises 729 residues: Sodium-dependent neutral amino acid transporter B(0)AT2 (729 aa).

Residues 1 to 69 (MPKNSKVVKR…ERPAWNSKLQ (69 aa)) lie on the Cytoplasmic side of the membrane. Phosphoserine is present on residues S25 and S55. The next 3 membrane-spanning stretches (helical) occupy residues 70-90 (YILA…FPYL), 98-117 (AYLL…LFFL), and 142-162 (GIGF…NVII). At 163-225 (GWTLFYFSQS…SSISESGGLN (63 aa)) the chain is on the extracellular side. A glycan (N-linked (GlcNAc...) asparagine) is linked at N187. 4 consecutive transmembrane segments (helical) span residues 226 to 244 (WKMT…LAMI), 253 to 270 (IMYF…CFLI), 306 to 323 (VFFA…FSSY), and 335 to 356 (VLVS…FAVL). At 357-452 (GFKANIVNEK…FIAFTEAMTH (96 aa)) the chain is on the extracellular side. Residues N383 and N394 are each glycosylated (N-linked (GlcNAc...) asparagine). A run of 5 helical transmembrane segments spans residues 453 to 472 (FPAS…NLGL), 496 to 514 (ILTV…MFVQ), 530 to 550 (TLPL…VYGI), 571 to 592 (YMWK…IVNM), and 620 to 642 (VVCF…IRRC). At 643–729 (NLIDDSSGNL…DMPDMPESDL (87 aa)) the chain is on the cytoplasmic side. Phosphoserine is present on residues S687, S699, and S701.

The protein belongs to the sodium:neurotransmitter symporter (SNF) (TC 2.A.22) family. SLC6A15 subfamily. In terms of tissue distribution, widely distributed in the central nervous system, including the olfactory bulb, the hypothalamus, the cerebral cortex, the hippocampus, and the cerebellum. In addition, intense expression is found in the motor nuclei including the oculomotor nucleus, abducens nucleus, trigeminal motor nucleus, facial nucleus, hypoglossal nucleus and ventral horn of spinal cord. Intense hybridization signals are also observed in the nuclei containing monoaminergic neurons, such as locus coeruleus, the substantia nigra pars compacta, the ventral tegmental area, the dorsal raphe nucleus and the median raphe nucleus.

Its subcellular location is the membrane. The catalysed reaction is L-leucine(in) + Na(+)(in) = L-leucine(out) + Na(+)(out). It carries out the reaction L-isoleucine(in) + Na(+)(in) = L-isoleucine(out) + Na(+)(out). It catalyses the reaction L-methionine(in) + Na(+)(in) = L-methionine(out) + Na(+)(out). The enzyme catalyses L-proline(in) + Na(+)(in) = L-proline(out) + Na(+)(out). The catalysed reaction is L-alanine(in) + Na(+)(in) = L-alanine(out) + Na(+)(out). It carries out the reaction L-asparagine(in) + Na(+)(in) = L-asparagine(out) + Na(+)(out). It catalyses the reaction L-valine(in) + Na(+)(in) = L-valine(out) + Na(+)(out). The enzyme catalyses L-cysteine(in) + Na(+)(in) = L-cysteine(out) + Na(+)(out). The catalysed reaction is L-glutamine(in) + Na(+)(in) = L-glutamine(out) + Na(+)(out). It carries out the reaction L-serine(in) + Na(+)(in) = L-serine(out) + Na(+)(out). It catalyses the reaction L-threonine(in) + Na(+)(in) = L-threonine(out) + Na(+)(out). The enzyme catalyses L-pipecolate(in) + Na(+)(in) = L-pipecolate(out) + Na(+)(out). The catalysed reaction is L-phenylalanine(in) + Na(+)(in) = L-phenylalanine(out) + Na(+)(out). Functions as a sodium-dependent neutral amino acid transporter. Exhibits preference for the branched-chain amino acids, particularly leucine, valine and isoleucine and methionine. Can also transport low-affinity substrates such as alanine, phenylalanine, glutamine and pipecolic acid. Mediates the saturable, pH-sensitive and electrogenic cotransport of proline and sodium ions with a stoichiometry of 1:1. May have a role as transporter for neurotransmitter precursors into neurons. In contrast to other members of the neurotransmitter transporter family, does not appear to be chloride-dependent. The chain is Sodium-dependent neutral amino acid transporter B(0)AT2 (Slc6a15) from Rattus norvegicus (Rat).